The following is a 334-amino-acid chain: Ornithine carbamoyltransferase (334 aa).

Carbamoyl phosphate-binding positions include 57-60, Gln84, Arg108, and 135-138; these read STRT and HPTQ. L-ornithine contacts are provided by residues Asn168, Asp232, and 236–237; that span reads SM. Carbamoyl phosphate is bound by residues 274 to 275 and Arg321; that span reads CL.

It belongs to the aspartate/ornithine carbamoyltransferase superfamily. OTCase family.

It is found in the cytoplasm. The enzyme catalyses carbamoyl phosphate + L-ornithine = L-citrulline + phosphate + H(+). Its pathway is amino-acid biosynthesis; L-arginine biosynthesis; L-arginine from L-ornithine and carbamoyl phosphate: step 1/3. Functionally, reversibly catalyzes the transfer of the carbamoyl group from carbamoyl phosphate (CP) to the N(epsilon) atom of ornithine (ORN) to produce L-citrulline. In Actinobacillus pleuropneumoniae serotype 5b (strain L20), this protein is Ornithine carbamoyltransferase.